The sequence spans 308 residues: N-acetylmuramic acid 6-phosphate etherase (308 aa).

Residues 62–225 (TAARLRQGGR…STGVMVQLGK (164 aa)) form the SIS domain. Glutamate 90 (proton donor) is an active-site residue. Glutamate 121 is an active-site residue.

Belongs to the GCKR-like family. MurNAc-6-P etherase subfamily. As to quaternary structure, homodimer.

The enzyme catalyses N-acetyl-D-muramate 6-phosphate + H2O = N-acetyl-D-glucosamine 6-phosphate + (R)-lactate. It functions in the pathway amino-sugar metabolism; N-acetylmuramate degradation. Specifically catalyzes the cleavage of the D-lactyl ether substituent of MurNAc 6-phosphate, producing GlcNAc 6-phosphate and D-lactate. This Thermosynechococcus vestitus (strain NIES-2133 / IAM M-273 / BP-1) protein is N-acetylmuramic acid 6-phosphate etherase.